The following is a 94-amino-acid chain: Co-chaperonin GroES (94 aa).

Belongs to the GroES chaperonin family. As to quaternary structure, heptamer of 7 subunits arranged in a ring. Interacts with the chaperonin GroEL.

The protein resides in the cytoplasm. Functionally, together with the chaperonin GroEL, plays an essential role in assisting protein folding. The GroEL-GroES system forms a nano-cage that allows encapsulation of the non-native substrate proteins and provides a physical environment optimized to promote and accelerate protein folding. GroES binds to the apical surface of the GroEL ring, thereby capping the opening of the GroEL channel. This is Co-chaperonin GroES from Bacillus cereus (strain ZK / E33L).